Consider the following 139-residue polypeptide: Putative pre-16S rRNA nuclease (139 aa).

This sequence belongs to the YqgF nuclease family.

It localises to the cytoplasm. Functionally, could be a nuclease involved in processing of the 5'-end of pre-16S rRNA. The protein is Putative pre-16S rRNA nuclease of Rippkaea orientalis (strain PCC 8801 / RF-1) (Cyanothece sp. (strain PCC 8801)).